A 216-amino-acid chain; its full sequence is Adenylate kinase (216 aa).

10–15 (GAGKGT) contributes to the ATP binding site. The NMP stretch occupies residues 30 to 59 (STGDMFRAAMKAETELGLQAKSFIDKGALV). Residues threonine 31, arginine 36, 57–59 (ALV), 85–88 (GFPR), and glutamine 92 each bind AMP. Residues 126–163 (GRRICKECGATYHLEFNPPAKADVCDKCGGELYQRSDD) form an LID region. Arginine 127 contributes to the ATP binding site. Positions 130 and 133 each coordinate Zn(2+). Position 136–137 (136–137 (TY)) interacts with ATP. Residues cysteine 150 and cysteine 153 each contribute to the Zn(2+) site. The AMP site is built by arginine 160 and arginine 171. Residue glutamine 199 participates in ATP binding.

It belongs to the adenylate kinase family. As to quaternary structure, monomer.

The protein resides in the cytoplasm. It carries out the reaction AMP + ATP = 2 ADP. It functions in the pathway purine metabolism; AMP biosynthesis via salvage pathway; AMP from ADP: step 1/1. Its function is as follows. Catalyzes the reversible transfer of the terminal phosphate group between ATP and AMP. Plays an important role in cellular energy homeostasis and in adenine nucleotide metabolism. The sequence is that of Adenylate kinase from Bacillus cytotoxicus (strain DSM 22905 / CIP 110041 / 391-98 / NVH 391-98).